Reading from the N-terminus, the 670-residue chain is UvrABC system protein B (670 aa).

Residues 28-414 (NNFKQGLQEQ…KKIPIVEQII (387 aa)) form the Helicase ATP-binding domain. Position 41-48 (41-48 (GATGTGKT)) interacts with ATP. Residues 94-117 (YYDYYQPEAYVASSDTYIEKDSKI) carry the Beta-hairpin motif. The Helicase C-terminal domain occupies 432 to 594 (QMDDLYFEIK…VTPTALNKTI (163 aa)). Positions 631–666 (NKEIKRLQKMMKEAAKTLDFEKAATLRDLILELEKK) constitute a UVR domain.

It belongs to the UvrB family. As to quaternary structure, forms a heterotetramer with UvrA during the search for lesions. Interacts with UvrC in an incision complex.

It localises to the cytoplasm. In terms of biological role, the UvrABC repair system catalyzes the recognition and processing of DNA lesions. A damage recognition complex composed of 2 UvrA and 2 UvrB subunits scans DNA for abnormalities. Upon binding of the UvrA(2)B(2) complex to a putative damaged site, the DNA wraps around one UvrB monomer. DNA wrap is dependent on ATP binding by UvrB and probably causes local melting of the DNA helix, facilitating insertion of UvrB beta-hairpin between the DNA strands. Then UvrB probes one DNA strand for the presence of a lesion. If a lesion is found the UvrA subunits dissociate and the UvrB-DNA preincision complex is formed. This complex is subsequently bound by UvrC and the second UvrB is released. If no lesion is found, the DNA wraps around the other UvrB subunit that will check the other stand for damage. The sequence is that of UvrABC system protein B from Onion yellows phytoplasma (strain OY-M).